Consider the following 93-residue polypeptide: Leydig cell tumor 10 kDa protein (93 aa).

The tract at residues 1–41 (MAQGQRKFQAQKPKSKAAAAERSRGPRKGGRVIGPKKARVV) is disordered. Positions 7-18 (KFQAQKPKSKAA) are enriched in low complexity. The span at 25 to 39 (GPRKGGRVIGPKKAR) shows a compositional bias: basic residues.

The protein belongs to the UPF0390 family. In terms of tissue distribution, leydig cell tumor, testis and placenta.

In terms of biological role, may have a potential role in hypercalcemia of malignancy. This is Leydig cell tumor 10 kDa protein from Rattus norvegicus (Rat).